The following is a 163-amino-acid chain: Nucleotide-binding protein HD_0358 (163 aa).

This sequence belongs to the YajQ family.

Its function is as follows. Nucleotide-binding protein. This Haemophilus ducreyi (strain 35000HP / ATCC 700724) protein is Nucleotide-binding protein HD_0358.